The primary structure comprises 278 residues: Undecaprenyl-diphosphatase 1 (278 aa).

Transmembrane regions (helical) follow at residues 45–65 (AVIG…LVYF), 95–115 (WWVI…KPLI), 119–139 (LASL…MWWA), 191–211 (VAAT…AGLY), 225–245 (PLAV…AWLL), and 256–276 (FVVY…TGVL).

Belongs to the UppP family.

The protein localises to the cell membrane. The catalysed reaction is di-trans,octa-cis-undecaprenyl diphosphate + H2O = di-trans,octa-cis-undecaprenyl phosphate + phosphate + H(+). Its function is as follows. Catalyzes the dephosphorylation of undecaprenyl diphosphate (UPP). Confers resistance to bacitracin. In Streptomyces coelicolor (strain ATCC BAA-471 / A3(2) / M145), this protein is Undecaprenyl-diphosphatase 1.